A 404-amino-acid chain; its full sequence is G1/S-specific cyclin-E2 (404 aa).

The tract at residues 1 to 41 (MSRRSSRLQAKQHAQPNQPDSPQETQIIQAKKRKTAQDVKK) is disordered. Polar residues predominate over residues 7–28 (RLQAKQHAQPNQPDSPQETQII). Phosphoserine is present on Ser21. Lys348 carries the N6-lactoyllysine modification. A Phosphoserine modification is found at Ser383. A Phosphothreonine modification is found at Thr392.

The protein belongs to the cyclin family. Cyclin E subfamily. Interacts with the CDK2 (in vivo) and CDK3 (in vitro) protein kinases to form a serine/threonine kinase holoenzyme complex. The cyclin subunit imparts substrate specificity to the complex. In terms of processing, phosphorylation by CDK2 triggers its release from CDK2 and degradation via the ubiquitin proteasome pathway. Lactylated at Lys-348. Delactylated by SIRT3. In terms of tissue distribution, highest levels in adult testis, thymus and brain. Lower levels in placenta, spleen and colon.

The protein localises to the nucleus. In terms of biological role, essential for the control of the cell cycle at the late G1 and early S phase. This Mus musculus (Mouse) protein is G1/S-specific cyclin-E2 (Ccne2).